The following is a 1167-amino-acid chain: Topoisomerase 1-associated factor 1 (1167 aa).

Disordered stretches follow at residues 332-353 (SKRW…NNDF), 563-594 (SRRR…DYAE), 889-969 (KYSH…LENT), 981-1093 (YVHA…DAID), and 1105-1167 (FDDD…SDSE). A compositionally biased stretch (basic and acidic residues) spans 572 to 582 (REEQLVNKGSD). Acidic residues-rich tracts occupy residues 583-593 (EEQESEDEDYA) and 949-958 (EEEPVDEETL). Basic and acidic residues-rich tracts occupy residues 959-969 (EERRQARLENT) and 996-1013 (EFFR…ERIK). Positions 1062–1074 (ELEEDDILMDDME) are enriched in acidic residues. Residues 1078–1088 (RASSGEYSSND) show a composition bias toward polar residues. The span at 1110 to 1127 (AFGRDRDKDETSVDRDGA) shows a compositional bias: basic and acidic residues.

This sequence belongs to the timeless family.

It localises to the nucleus. Involved in chromosome segregation during meiosis and DNA damage repair. The polypeptide is Topoisomerase 1-associated factor 1 (tof1) (Emericella nidulans (strain FGSC A4 / ATCC 38163 / CBS 112.46 / NRRL 194 / M139) (Aspergillus nidulans)).